We begin with the raw amino-acid sequence, 894 residues long: Microsomal triglyceride transfer protein large subunit (894 aa).

The N-terminal stretch at 1 to 21 is a signal peptide; sequence MILLAVLFLCFFSSYSASVKG. Positions 28 to 658 constitute a Vitellogenin domain; it reads LNNERLYKLT…IFQYIGKAEL (631 aa). A disulfide bridge links C174 with C194.

Interacts with PRAP1. In terms of assembly, heterodimer; heterodimerizes with the protein disulfide isomerase (P4HB/PDI). Interacts with APOB. As to quaternary structure, heterodimer; heterodimerizes with the protein disulfide isomerase (P4HB/PDI). In terms of processing, cleaved by signal peptidase between residues Gln-33 and Asn-34. Mainly expressed in the intestine and the liver, and at lower levels in white and brown fat cells. Expressed in heart. As to expression, ubiquitous, and is the major isoform in hematopoietic cells and adipocytes.

It is found in the endoplasmic reticulum. Its subcellular location is the golgi apparatus. The catalysed reaction is a 1,2-diacyl-sn-glycero-3-phosphocholine(in) = a 1,2-diacyl-sn-glycero-3-phosphocholine(out). It carries out the reaction a 1,2-diacyl-sn-glycero-3-phosphoethanolamine(in) = a 1,2-diacyl-sn-glycero-3-phosphoethanolamine(out). The enzyme catalyses a cholesterol ester(in) = a cholesterol ester(out). It catalyses the reaction a triacyl-sn-glycerol(in) = a triacyl-sn-glycerol(out). In terms of biological role, catalyzes the transport of triglyceride, cholesteryl ester, and phospholipid between phospholipid surfaces. Required for the assembly and secretion of plasma lipoproteins that contain apolipoprotein B. May be involved in regulating cholesteryl ester biosynthesis in cells that produce lipoproteins. Critical for the development of natural killer T (NKT) cells. Required for the assembly and secretion of plasma lipoproteins that contain apolipoprotein B. This chain is Microsomal triglyceride transfer protein large subunit (Mttp), found in Mus musculus (Mouse).